Here is a 50-residue protein sequence, read N- to C-terminus: Small integral membrane protein 46 (50 aa).

A helical membrane pass occupies residues 15–37; that stretch reads TTFQLWLQLLLWAHLAVRFLGYL.

Its subcellular location is the membrane. The polypeptide is Small integral membrane protein 46 (Homo sapiens (Human)).